The following is a 266-amino-acid chain: Secreted RxLR effector protein 128 (266 aa).

Residues Met1 to Thr18 form the signal peptide. The short motif at Arg48–Arg63 is the RxLR-dEER element.

It belongs to the RxLR effector family.

It localises to the secreted. It is found in the host nucleus. Secreted effector that dos not suppress the host cell death induced by cell death-inducing proteins. The polypeptide is Secreted RxLR effector protein 128 (Plasmopara viticola (Downy mildew of grapevine)).